Reading from the N-terminus, the 834-residue chain is U-box domain-containing protein 33 (834 aa).

The tract at residues 232 to 308 (FSTPESEHQH…SPSSFPDGVD (77 aa)) is disordered. Composition is skewed to polar residues over residues 243–273 (SRVQSTDSVQQLVSNGSSTEQSGRVSDGSLN) and 284–293 (SEVTGSATVM). Positions 334–462 (LRRQKAEKNA…SHAETSTLQL (129 aa)) form a coiled coil. The region spanning 481–744 (FDSTLKIGEG…EVWRVLEPMR (264 aa)) is the Protein kinase domain. Residues 487-495 (IGEGGYGSI) and K508 each bind ATP. The active-site Proton acceptor is the D603. The U-box domain maps to 762 to 834 (IAPPYFICPI…AIQEWLQHHL (73 aa)).

Belongs to the protein kinase superfamily. Ser/Thr protein kinase family.

The enzyme catalyses L-seryl-[protein] + ATP = O-phospho-L-seryl-[protein] + ADP + H(+). It catalyses the reaction L-threonyl-[protein] + ATP = O-phospho-L-threonyl-[protein] + ADP + H(+). It carries out the reaction S-ubiquitinyl-[E2 ubiquitin-conjugating enzyme]-L-cysteine + [acceptor protein]-L-lysine = [E2 ubiquitin-conjugating enzyme]-L-cysteine + N(6)-ubiquitinyl-[acceptor protein]-L-lysine.. The protein operates within protein modification; protein ubiquitination. Functionally, functions as an E3 ubiquitin ligase. This chain is U-box domain-containing protein 33 (PUB33), found in Arabidopsis thaliana (Mouse-ear cress).